The chain runs to 254 residues: Type III pantothenate kinase (254 aa).

An ATP-binding site is contributed by 13-20; it reads MIGNTRQH. Substrate contacts are provided by residues Tyr84 and 88 to 91; that span reads GLDR. The Proton acceptor role is filled by Asp90. Asp110 is a binding site for K(+). Thr113 contacts ATP. Thr166 contributes to the substrate binding site.

This sequence belongs to the type III pantothenate kinase family. Homodimer. It depends on NH4(+) as a cofactor. Requires K(+) as cofactor.

The protein resides in the cytoplasm. The enzyme catalyses (R)-pantothenate + ATP = (R)-4'-phosphopantothenate + ADP + H(+). Its pathway is cofactor biosynthesis; coenzyme A biosynthesis; CoA from (R)-pantothenate: step 1/5. Its function is as follows. Catalyzes the phosphorylation of pantothenate (Pan), the first step in CoA biosynthesis. The chain is Type III pantothenate kinase from Thermosynechococcus vestitus (strain NIES-2133 / IAM M-273 / BP-1).